Reading from the N-terminus, the 434-residue chain is MESKSFSKPTRTATVIVGTQFGDEGKGKLVDYLSDKYDIVVRYQGGANAGHTICFDNKSVVLHLIPSGIFHEGCVCVIGNGVVIDPVALLEEIKKVEELGYDVKGRLFISHNAHLIMPYHKRLDSLHEDAQGEQKIGTTGRGIGPSYEDKFARKGIRVVDLLSPDVLQEKLRENLAAKNKLFRNIYEKEEFDVEELVRDYSEFDKIIDPYVTNTQLYLSRQLKAGKTVLLEGAQGCLLDVDHGTYPYVTSSNPTSGGACTGSGIAPNYVGKVIGVVKAYMTRVGNGAFPSELFDETGESLCRIGHEFGATTGRKRRCGWIDLVALRYSLTVNGVTEIALTKLDVLDTFEEVKVCTSYMLDGKEIHDFPTDHPTLSRVTPVYKTLKGWMSSNAHARTLDDMCPEARSYVTFLEDELQVPVTFVSVGPGREETVYR.

Residues 22-28 and 50-52 contribute to the GTP site; these read GDEGKGK and GHT. The active-site Proton acceptor is the Asp23. Mg(2+) contacts are provided by Asp23 and Gly50. IMP is bound by residues 23–26, 48–51, Thr139, Arg153, Gln234, Thr249, and Arg313; these read DEGK and NAGH. The Proton donor role is filled by His51. A substrate-binding site is contributed by 309-315; it reads ATTGRKR. GTP-binding positions include Arg315, 341–343, and 423–425; these read KLD and SVG.

This sequence belongs to the adenylosuccinate synthetase family. Homodimer. Mg(2+) is required as a cofactor.

The protein localises to the cytoplasm. It catalyses the reaction IMP + L-aspartate + GTP = N(6)-(1,2-dicarboxyethyl)-AMP + GDP + phosphate + 2 H(+). It participates in purine metabolism; AMP biosynthesis via de novo pathway; AMP from IMP: step 1/2. Functionally, plays an important role in the de novo pathway of purine nucleotide biosynthesis. Catalyzes the first committed step in the biosynthesis of AMP from IMP. This is Adenylosuccinate synthetase from Chlorobium limicola (strain DSM 245 / NBRC 103803 / 6330).